Reading from the N-terminus, the 176-residue chain is Large ribosomal subunit protein uL10 (176 aa).

The protein belongs to the universal ribosomal protein uL10 family. In terms of assembly, part of the ribosomal stalk of the 50S ribosomal subunit. The N-terminus interacts with L11 and the large rRNA to form the base of the stalk. The C-terminus forms an elongated spine to which L12 dimers bind in a sequential fashion forming a multimeric L10(L12)X complex.

In terms of biological role, forms part of the ribosomal stalk, playing a central role in the interaction of the ribosome with GTP-bound translation factors. The sequence is that of Large ribosomal subunit protein uL10 from Streptomyces avermitilis (strain ATCC 31267 / DSM 46492 / JCM 5070 / NBRC 14893 / NCIMB 12804 / NRRL 8165 / MA-4680).